The chain runs to 109 residues: Large ribosomal subunit protein uL22 (109 aa).

The protein belongs to the universal ribosomal protein uL22 family. As to quaternary structure, part of the 50S ribosomal subunit.

Its function is as follows. This protein binds specifically to 23S rRNA; its binding is stimulated by other ribosomal proteins, e.g. L4, L17, and L20. It is important during the early stages of 50S assembly. It makes multiple contacts with different domains of the 23S rRNA in the assembled 50S subunit and ribosome. In terms of biological role, the globular domain of the protein is located near the polypeptide exit tunnel on the outside of the subunit, while an extended beta-hairpin is found that lines the wall of the exit tunnel in the center of the 70S ribosome. In Wolinella succinogenes (strain ATCC 29543 / DSM 1740 / CCUG 13145 / JCM 31913 / LMG 7466 / NCTC 11488 / FDC 602W) (Vibrio succinogenes), this protein is Large ribosomal subunit protein uL22.